The primary structure comprises 268 residues: Lectin ESA-2 (268 aa).

Tandem repeats lie at residues 1–67 (GRYT…RRGE), 68–135 (SNVY…QSGG), 136–202 (DTYN…LSGA), and 203–268 (NNYS…VATS). Residues 1-268 (GRYTVQNQWG…PIGFKGVATS (268 aa)) are 4 X approximate tandem repeats.

Monomer.

Lectin specific for high mannose N-glycans, recognizes the branched moiety of these glycans. Does not recognize other types of N-glycans or monosaccharides. Agglutinates trypsin-treated sheep and rabbit erythrocytes and untreated sheep erythrocytes. Has mitogenic activity on mouse lymphocytes. Does not require metal ions for activity. The polypeptide is Lectin ESA-2 (Eucheuma serra (Marine red alga)).